A 207-amino-acid polypeptide reads, in one-letter code: Adenine phosphoribosyltransferase (207 aa).

The disordered stretch occupies residues 1 to 33 (MRPAKPPQSKERKRSKSLTSADHDNSPQRAETA).

Belongs to the purine/pyrimidine phosphoribosyltransferase family. Homodimer.

It localises to the cytoplasm. The catalysed reaction is AMP + diphosphate = 5-phospho-alpha-D-ribose 1-diphosphate + adenine. It functions in the pathway purine metabolism; AMP biosynthesis via salvage pathway; AMP from adenine: step 1/1. Its function is as follows. Catalyzes a salvage reaction resulting in the formation of AMP, that is energically less costly than de novo synthesis. The chain is Adenine phosphoribosyltransferase from Corynebacterium jeikeium (strain K411).